Here is an 89-residue protein sequence, read N- to C-terminus: Small ribosomal subunit protein uS15 (89 aa).

Belongs to the universal ribosomal protein uS15 family. In terms of assembly, part of the 30S ribosomal subunit. Forms a bridge to the 50S subunit in the 70S ribosome, contacting the 23S rRNA.

One of the primary rRNA binding proteins, it binds directly to 16S rRNA where it helps nucleate assembly of the platform of the 30S subunit by binding and bridging several RNA helices of the 16S rRNA. Its function is as follows. Forms an intersubunit bridge (bridge B4) with the 23S rRNA of the 50S subunit in the ribosome. The sequence is that of Small ribosomal subunit protein uS15 from Klebsiella pneumoniae (strain 342).